The chain runs to 216 residues: ATP phosphoribosyltransferase (216 aa).

It belongs to the ATP phosphoribosyltransferase family. Short subfamily. As to quaternary structure, heteromultimer composed of HisG and HisZ subunits.

The protein localises to the cytoplasm. The enzyme catalyses 1-(5-phospho-beta-D-ribosyl)-ATP + diphosphate = 5-phospho-alpha-D-ribose 1-diphosphate + ATP. Its pathway is amino-acid biosynthesis; L-histidine biosynthesis; L-histidine from 5-phospho-alpha-D-ribose 1-diphosphate: step 1/9. Catalyzes the condensation of ATP and 5-phosphoribose 1-diphosphate to form N'-(5'-phosphoribosyl)-ATP (PR-ATP). Has a crucial role in the pathway because the rate of histidine biosynthesis seems to be controlled primarily by regulation of HisG enzymatic activity. This chain is ATP phosphoribosyltransferase, found in Streptococcus thermophilus (strain ATCC BAA-491 / LMD-9).